Reading from the N-terminus, the 354-residue chain is Homoserine O-succinyltransferase (354 aa).

Residue Cys-146 is the Acyl-thioester intermediate of the active site. Positions 167 and 196 each coordinate substrate. His-239 functions as the Proton acceptor in the catalytic mechanism. Glu-241 is an active-site residue. Residue Arg-253 participates in substrate binding.

It belongs to the MetA family.

Its subcellular location is the cytoplasm. It catalyses the reaction L-homoserine + succinyl-CoA = O-succinyl-L-homoserine + CoA. Its pathway is amino-acid biosynthesis; L-methionine biosynthesis via de novo pathway; O-succinyl-L-homoserine from L-homoserine: step 1/1. Transfers a succinyl group from succinyl-CoA to L-homoserine, forming succinyl-L-homoserine. In Methylobacter tundripaludum (strain ATCC BAA-1195 / DSM 17260 / SV96), this protein is Homoserine O-succinyltransferase.